A 293-amino-acid polypeptide reads, in one-letter code: AA9 family lytic polysaccharide monooxygenase E (293 aa).

The N-terminal stretch at 1-19 (MKGLLSVAALSLAVSEVSA) is a signal peptide. Cu(2+) contacts are provided by histidine 20 and histidine 90. A disulfide bridge connects residues cysteine 59 and cysteine 172. The O2 site is built by histidine 158 and glutamine 167. Tyrosine 169 serves as a coordination point for Cu(2+). Residues 257 to 293 (CAVAKWGQCGGNGWTGCTTCAAGSTCNTQNAYYHQCV) form the CBM1 domain.

It belongs to the polysaccharide monooxygenase AA9 family. Cu(2+) is required as a cofactor.

It is found in the secreted. It carries out the reaction [(1-&gt;4)-beta-D-glucosyl]n+m + reduced acceptor + O2 = 4-dehydro-beta-D-glucosyl-[(1-&gt;4)-beta-D-glucosyl]n-1 + [(1-&gt;4)-beta-D-glucosyl]m + acceptor + H2O.. With respect to regulation, glucose dehydrogenase and aryl-alcohol quinone oxidoreductases regulate the oxidative degradation of cellulose since they can act as catalytically efficient electron donors for LPMO9E. Lytic polysaccharide monooxygenase (LPMO) that depolymerizes crystalline and amorphous polysaccharides via the oxidation of scissile alpha- or beta-(1-4)-glycosidic bonds, yielding only C1 oxidation products. Catalysis by LPMOs requires the reduction of the active-site copper from Cu(II) to Cu(I) by a reducing agent and H(2)O(2) or O(2) as a cosubstrate. Improves the progression of lytic enzymes in delignified miscanthus cell walls. This boosting effect dependents on the cellular type which indicates contrasted recalcitrance levels in plant tissues. This Podospora anserina (strain S / ATCC MYA-4624 / DSM 980 / FGSC 10383) (Pleurage anserina) protein is AA9 family lytic polysaccharide monooxygenase E.